The sequence spans 347 residues: Isopentenyl-diphosphate delta-isomerase (347 aa).

Position 5-6 (5-6) interacts with substrate; the sequence is RK. Residues S61, 62 to 64, S92, and N120 each bind FMN; that span reads SMT. 92 to 94 contacts substrate; the sequence is SMR. Q159 is a substrate binding site. E160 is a Mg(2+) binding site. Residues K189, S214, T219, 269-271, and 290-291 contribute to the FMN site; these read GLR and AR.

This sequence belongs to the IPP isomerase type 2 family. As to quaternary structure, homooctamer. Dimer of tetramers. Requires FMN as cofactor. The cofactor is NADPH. It depends on Mg(2+) as a cofactor.

The protein localises to the cytoplasm. The catalysed reaction is isopentenyl diphosphate = dimethylallyl diphosphate. Involved in the biosynthesis of isoprenoids. Catalyzes the 1,3-allylic rearrangement of the homoallylic substrate isopentenyl (IPP) to its allylic isomer, dimethylallyl diphosphate (DMAPP). The protein is Isopentenyl-diphosphate delta-isomerase of Thermoplasma volcanium (strain ATCC 51530 / DSM 4299 / JCM 9571 / NBRC 15438 / GSS1).